A 176-amino-acid chain; its full sequence is HTH-type transcriptional regulator DctR (176 aa).

Positions 109–174 (VPEANVSLSR…ELVRHQHIDY (66 aa)) constitute an HTH luxR-type domain. The H-T-H motif DNA-binding region spans 133-152 (TEDILEKLKISLKTFYCHKH).

Functionally, may act as a transcriptional regulator of dctA. Could be involved in the regulation of the genes coding for the type III secretion system in enterohaemorragic strains. This Escherichia coli O157:H7 protein is HTH-type transcriptional regulator DctR (dctR).